Here is a 329-residue protein sequence, read N- to C-terminus: Probable cell division protein WhiA (329 aa).

Residues 275-308 (SLEELGALADPPLTKDAVAGRIRRLLAMADKRAQ) constitute a DNA-binding region (H-T-H motif).

The protein belongs to the WhiA family.

Involved in cell division and chromosome segregation. The polypeptide is Probable cell division protein WhiA (Streptomyces avermitilis (strain ATCC 31267 / DSM 46492 / JCM 5070 / NBRC 14893 / NCIMB 12804 / NRRL 8165 / MA-4680)).